A 133-amino-acid chain; its full sequence is uncharacterized protein (133 aa).

This is an uncharacterized protein from Human adenovirus B serotype 7 (HAdV-7).